A 376-amino-acid polypeptide reads, in one-letter code: UDP-N-acetylglucosamine 2-epimerase (376 aa).

Residues arginine 10, lysine 15, aspartate 95, glutamate 117, histidine 213, glutamine 271, phenylalanine 276, 290-292 (SGG), glutamate 296, and arginine 313 each bind substrate.

It belongs to the UDP-N-acetylglucosamine 2-epimerase family. In terms of assembly, homodimer.

The protein localises to the cytoplasm. The catalysed reaction is UDP-N-acetyl-alpha-D-glucosamine = UDP-N-acetyl-alpha-D-mannosamine. Its pathway is bacterial outer membrane biogenesis; enterobacterial common antigen biosynthesis. Functionally, catalyzes the reversible epimerization at C-2 of UDP-N-acetylglucosamine (UDP-GlcNAc) and thereby provides bacteria with UDP-N-acetylmannosamine (UDP-ManNAc), the activated donor of ManNAc residues. The chain is UDP-N-acetylglucosamine 2-epimerase from Escherichia coli O157:H7.